A 597-amino-acid chain; its full sequence is Nucleolar protein 58 (597 aa).

The 126-residue stretch at 285 to 410 (IAPNMTELVG…LENNLRQLEG (126 aa)) folds into the Nop domain. Residues 452–597 (AEAPKKPLIQ…KKKKKKSSKE (146 aa)) form a disordered region. The span at 482–499 (KSKKDKKEKKEKKDKKAK) shows a compositional bias: basic residues. Residues 532–551 (IKEDGTLEILSKKDFKGKDA) show a composition bias toward basic and acidic residues. The span at 552 to 561 (EAEEEAEEEE) shows a compositional bias: acidic residues. Residues 588–597 (KKKKKKSSKE) are compositionally biased toward basic residues.

It belongs to the NOP5/NOP56 family.

It is found in the nucleus. The protein resides in the nucleolus. Functionally, required for pre-18S rRNA processing. May bind microtubules. The protein is Nucleolar protein 58 (nop-58) of Neurospora crassa (strain ATCC 24698 / 74-OR23-1A / CBS 708.71 / DSM 1257 / FGSC 987).